The chain runs to 577 residues: Protein hinderin (577 aa).

Serine 21 carries the phosphoserine modification. The stretch at 91–167 forms a coiled coil; it reads LKDLCLEDKR…CQELLSLYQK (77 aa). Phosphoserine is present on serine 179. Residues 251 to 282 form a disordered region; that stretch reads TLHHPKDDLDKIPSETTTCNCESPGRKPAVPT. The segment covering 254–263 has biased composition (basic and acidic residues); it reads HPKDDLDKIP. Residues 358–402 are a coiled coil; the sequence is LKKQISEDRKQQLMLQKMELEIEKERLQHLLAQQETKLLLKQQQL. Disordered stretches follow at residues 425–444, 449–492, and 520–540; these read SSSI…RKER, FHSH…GSLK, and LSPN…GAWN. Basic and acidic residues predominate over residues 449–468; that stretch reads FHSHMKDDAQWSCQKKDTCR. Phosphoserine is present on residues serine 490 and serine 521.

As to quaternary structure, interacts (via N- and C-terminal domains) with SMC3 (via central hinge region). As to expression, widely expressed.

Functionally, competes with SMC1 for binding to SMC3. May affect the availability of SMC3 to engage in the formation of multimeric protein complexes. The protein is Protein hinderin (KIAA1328) of Homo sapiens (Human).